The chain runs to 405 residues: Serpin H1 (405 aa).

The N-terminal stretch at 1-15 is a signal peptide; it reads MQIFLVLALCGLAAA. Residues Asn-107 and Asn-112 are each glycosylated (N-linked (GlcNAc...) asparagine). A Prevents secretion from ER motif is present at residues 402–405; it reads RDEL.

Belongs to the serpin family.

Its subcellular location is the endoplasmic reticulum lumen. Its function is as follows. Binds specifically to collagen. Could be involved as a chaperone in the biosynthetic pathway of collagen. The sequence is that of Serpin H1 (SERPINH1) from Gallus gallus (Chicken).